Reading from the N-terminus, the 291-residue chain is 4-hydroxy-tetrahydrodipicolinate synthase (291 aa).

Thr45 is a binding site for pyruvate. Tyr133 functions as the Proton donor/acceptor in the catalytic mechanism. Lys161 (schiff-base intermediate with substrate) is an active-site residue. Residue Ile203 participates in pyruvate binding.

This sequence belongs to the DapA family. Homotetramer; dimer of dimers.

The protein localises to the cytoplasm. The enzyme catalyses L-aspartate 4-semialdehyde + pyruvate = (2S,4S)-4-hydroxy-2,3,4,5-tetrahydrodipicolinate + H2O + H(+). The protein operates within amino-acid biosynthesis; L-lysine biosynthesis via DAP pathway; (S)-tetrahydrodipicolinate from L-aspartate: step 3/4. Functionally, catalyzes the condensation of (S)-aspartate-beta-semialdehyde [(S)-ASA] and pyruvate to 4-hydroxy-tetrahydrodipicolinate (HTPA). The protein is 4-hydroxy-tetrahydrodipicolinate synthase of Methylococcus capsulatus (strain ATCC 33009 / NCIMB 11132 / Bath).